The sequence spans 275 residues: Trans-aconitate 2-methyltransferase (275 aa).

It belongs to the methyltransferase superfamily. Tam family.

Its subcellular location is the cytoplasm. The catalysed reaction is trans-aconitate + S-adenosyl-L-methionine = (E)-3-(methoxycarbonyl)pent-2-enedioate + S-adenosyl-L-homocysteine. Catalyzes the S-adenosylmethionine monomethyl esterification of trans-aconitate. The chain is Trans-aconitate 2-methyltransferase from Pseudomonas aeruginosa (strain ATCC 15692 / DSM 22644 / CIP 104116 / JCM 14847 / LMG 12228 / 1C / PRS 101 / PAO1).